The sequence spans 150 residues: Dihydroneopterin triphosphate diphosphatase (150 aa).

Residues 5–146 (VYKRPVSILV…SNRQAIEQFV (142 aa)) form the Nudix hydrolase domain. 3 residues coordinate substrate: Lys7, Arg29, and Thr40. The Nudix box signature appears at 41–62 (GSVEEGETAPQAAMREVKEEVT). Mg(2+) contacts are provided by Glu56 and Glu60. A substrate-binding site is contributed by 81–84 (FEIF). Residue Glu117 participates in Mg(2+) binding. Residue Ser135 participates in substrate binding.

It belongs to the Nudix hydrolase family. The cofactor is Mg(2+).

The catalysed reaction is 7,8-dihydroneopterin 3'-triphosphate + H2O = 7,8-dihydroneopterin 3'-phosphate + diphosphate + H(+). Catalyzes the hydrolysis of dihydroneopterin triphosphate to dihydroneopterin monophosphate and pyrophosphate. Required for efficient folate biosynthesis. Can also hydrolyze nucleoside triphosphates with a preference for dATP. In Escherichia coli O157:H7, this protein is Dihydroneopterin triphosphate diphosphatase (nudB).